Here is a 61-residue protein sequence, read N- to C-terminus: Metallothionein-1 (61 aa).

M1 carries the N-acetylmethionine modification. The beta stretch occupies residues 1–29; that stretch reads MDPNCSCSTGGSCTCSSSCGCKNCKCTSC. C5, C7, C13, C15, C19, C21, C24, C26, C29, C33, C34, C36, C37, C41, C44, C48, C50, C57, C59, and C60 together coordinate a divalent metal cation. Positions 30 to 61 are alpha; that stretch reads KKSCCSCCPVGCSKCAQGCVCKGASDKCTCCA.

The protein belongs to the metallothionein superfamily. Type 1 family.

In terms of biological role, metallothioneins have a high content of cysteine residues that bind various heavy metals; these proteins are transcriptionally regulated by both heavy metals and glucocorticoids. In Rattus norvegicus (Rat), this protein is Metallothionein-1 (Mt1).